A 317-amino-acid polypeptide reads, in one-letter code: Phospho-N-acetylmuramoyl-pentapeptide-transferase (317 aa).

The next 9 membrane-spanning stretches (helical) occupy residues 3 to 23, 48 to 68, 72 to 92, 112 to 132, 141 to 161, 171 to 191, 193 to 213, 238 to 258, and 297 to 317; these read VIIY…PLFI, GTPT…MIIM, LNSN…IGLI, FLLQ…RFGS, ITWT…FVAV, LDGL…VVSF, WHQY…LGFL, AIAL…IYVI, and VVSV…LSLI.

This sequence belongs to the glycosyltransferase 4 family. MraY subfamily. It depends on Mg(2+) as a cofactor.

Its subcellular location is the cell membrane. It carries out the reaction UDP-N-acetyl-alpha-D-muramoyl-L-alanyl-gamma-D-glutamyl-meso-2,6-diaminopimeloyl-D-alanyl-D-alanine + di-trans,octa-cis-undecaprenyl phosphate = di-trans,octa-cis-undecaprenyl diphospho-N-acetyl-alpha-D-muramoyl-L-alanyl-D-glutamyl-meso-2,6-diaminopimeloyl-D-alanyl-D-alanine + UMP. It functions in the pathway cell wall biogenesis; peptidoglycan biosynthesis. In terms of biological role, catalyzes the initial step of the lipid cycle reactions in the biosynthesis of the cell wall peptidoglycan: transfers peptidoglycan precursor phospho-MurNAc-pentapeptide from UDP-MurNAc-pentapeptide onto the lipid carrier undecaprenyl phosphate, yielding undecaprenyl-pyrophosphoryl-MurNAc-pentapeptide, known as lipid I. This Clostridium acetobutylicum (strain ATCC 824 / DSM 792 / JCM 1419 / IAM 19013 / LMG 5710 / NBRC 13948 / NRRL B-527 / VKM B-1787 / 2291 / W) protein is Phospho-N-acetylmuramoyl-pentapeptide-transferase.